The following is a 257-amino-acid chain: AN1-type zinc finger protein 2B (257 aa).

AN1-type zinc fingers lie at residues 4 to 52 and 94 to 142; these read PDLG…QKDI and KIFT…HPTS. Residues cysteine 10, cysteine 15, cysteine 25, cysteine 28, cysteine 33, histidine 36, histidine 42, cysteine 44, cysteine 100, cysteine 105, cysteine 115, cysteine 118, cysteine 123, histidine 126, histidine 132, and cysteine 134 each contribute to the Zn(2+) site. The segment at 141-151 is VCP/p97-interacting motif (VIM); that stretch reads TSRAGLAAISR. Residues 153-187 are disordered; sequence QGLASTSTVPSPSRTLPSSSSPSRATPQLPPRTTS. Residues 156 to 179 show a composition bias toward low complexity; sequence ASTSTVPSPSRTLPSSSSPSRATP. Phosphoserine is present on residues serine 163, serine 173, and serine 187. 2 consecutive UIM domains span residues 197 to 216 and 221 to 240; these read SEDEALQRALELSLAEAKPQ and QEEEDLALAQALSASEAEYQ. The residue at position 254 (cysteine 254) is a Cysteine methyl ester. A lipid anchor (S-geranylgeranyl cysteine) is attached at cysteine 254. Residues 254-257 carry the CAAX motif motif; the sequence is CSLC. Residues 255–257 constitute a propeptide, removed in mature form; that stretch reads SLC.

In terms of assembly, binds 'Lys-48'-linked polyubiquitin chains of ubiquitinated proteins. Associates with the proteasome complex; upon exposure to arsenite. Interacts (via VIM motif) with VCP; the interaction is direct. Interacts with BAG6. Interacts with IGF1R (nascent precursor form). Interacts with DERL1, FAF2, NPLOC4 and UFD1; probably through VCP. Post-translationally, phosphorylated by MAPK14. Phosphorylation has no effect on association with the proteasome complex.

Its subcellular location is the endoplasmic reticulum membrane. In terms of biological role, plays a role in protein homeostasis by regulating both the translocation and the ubiquitin-mediated proteasomal degradation of nascent proteins at the endoplasmic reticulum. It is involved in the regulation of signal-mediated translocation of proteins into the endoplasmic reticulum. It also plays a role in the ubiquitin-mediated proteasomal degradation of proteins for which signal-mediated translocation to the endoplasmic reticulum has failed. May therefore function in the endoplasmic reticulum stress-induced pre-emptive quality control, a mechanism that selectively attenuates the translocation of newly synthesized proteins into the endoplasmic reticulum and reroutes them to the cytosol for proteasomal degradation. By controlling the steady-state expression of the IGF1R receptor, indirectly regulates the insulin-like growth factor receptor signaling pathway. In Rattus norvegicus (Rat), this protein is AN1-type zinc finger protein 2B.